The chain runs to 680 residues: METLESELTCPICLELFEDPLLLPCAHSLCFNCAHRILVSHCATNEPVESINAFQCPTCRHVITLSQRGLDGLKRNVTLQNIIDRFQKASVSGPNSPSETRRERAFDANTMSSAEKVLCQFCDQDPAQDAVKTCVTCEVSYCDECLKATHPNKKPFTGHRLIEPIPDSHIRGLMCLEHEDEKVNMYCVTDDQLICALCKLVGRHRDHQVAALSERYDKLKQNLESNLTNLIKRNTELETLLAKLIQTCQHVEVNASRQEAKLTEECDLLIEIIQQRRQIIGTKIKEGKVIRLRKLAQQIANCKQCLERSASLISQAEHSLKENDHARFLQTAKNITERVSMATASSQVLIPEINLNDTFDTFALDFSREKKLLECLDYLTAPNPPAIREELCTASYDTITVHWTSEDEFSVVSYELQYTIFTGQANVVNVACDGTCLLGSAGLCNSADSWMIVPNIKQNHYTVHGLQSGTKYIFTVKAINQAGSRSSEPGKLKTNSQPFRLDPKSAHRKLKVSHDNLTVERDESSSKKSHAPERFAGQGSYGVAGNVFIDSGRHYWEVVTSGSTWYAIGLAYRSAPKHEWIGKNAASWALCRCHNHWAVRHDGKETPIAPAPHLRRVGVLLDYDNGSIAFYDALSSVHLHTFHAALAQPVCPTFTVWNKCLTIVTGLPIPDHLDCTEQRP.

The RING-type zinc-finger motif lies at 10–60 (CPICLELFEDPLLLPCAHSLCFNCAHRILVSHCATNEPVESINAFQCPTCR). Phosphoserine occurs at positions 92 and 96. 2 B box-type zinc fingers span residues 116–165 (KVLC…IEPI) and 172–212 (GLMC…VAAL). Zn(2+) contacts are provided by C119, C122, C134, C137, C142, C145, H150, H159, C175, H178, C198, and H204. Residues 205-264 (RDHQVAALSERYDKLKQNLESNLTNLIKRNTELETLLAKLIQTCQHVEVNASRQEAKLTE) are a coiled coil. The 60-residue stretch at 320 to 379 (LKENDHARFLQTAKNITERVSMATASSQVLIPEINLNDTFDTFALDFSREKKLLECLDYL) folds into the COS domain. Residues 384 to 494 (PPAIREELCT…RSSEPGKLKT (111 aa)) form the Fibronectin type-III domain. Residues 484 to 498 (SRSSEPGKLKTNSQP) show a composition bias toward polar residues. Disordered stretches follow at residues 484–503 (SRSS…RLDP) and 516–535 (NLTV…PERF). The B30.2/SPRY domain occupies 495–672 (NSQPFRLDPK…IVTGLPIPDH (178 aa)). Residues 516 to 533 (NLTVERDESSSKKSHAPE) are compositionally biased toward basic and acidic residues. The residue at position 524 (S524) is a Phosphoserine.

This sequence belongs to the TRIM/RBCC family. In terms of assembly, homodimer or heterodimer with MID2. Interacts with IGBP1. In terms of processing, phosphorylated. Ubiquitously expressed in fetus and adult. At 9 dpc-10.5 dpc, highest expression found in frontonasal processes, branchial arches and CNS. From 12.5 dpc to 16.5 dpc, high levels found in rostral part of CNS. At 14.5 dpc, begins to be highly expressed in kidney and lung. At 16.5 dpc, highly expressed in the mucosa of the hindgut and cutaneous region of the stomach.

It localises to the cytoplasm. Its subcellular location is the cytoskeleton. It catalyses the reaction S-ubiquitinyl-[E2 ubiquitin-conjugating enzyme]-L-cysteine + [acceptor protein]-L-lysine = [E2 ubiquitin-conjugating enzyme]-L-cysteine + N(6)-ubiquitinyl-[acceptor protein]-L-lysine.. Its function is as follows. Has E3 ubiquitin ligase activity towards IGBP1, promoting its monoubiquitination, which results in deprotection of the catalytic subunit of protein phosphatase PP2A, and its subsequent degradation by polyubiquitination. The protein is E3 ubiquitin-protein ligase Midline-1 (Mid1) of Mus musculus (Mouse).